A 125-amino-acid polypeptide reads, in one-letter code: Holo-[acyl-carrier-protein] synthase (125 aa).

Mg(2+) is bound by residues aspartate 8 and glutamate 55.

This sequence belongs to the P-Pant transferase superfamily. AcpS family. It depends on Mg(2+) as a cofactor.

The protein localises to the cytoplasm. The enzyme catalyses apo-[ACP] + CoA = holo-[ACP] + adenosine 3',5'-bisphosphate + H(+). Its function is as follows. Transfers the 4'-phosphopantetheine moiety from coenzyme A to a Ser of acyl-carrier-protein. This chain is Holo-[acyl-carrier-protein] synthase, found in Treponema pallidum (strain Nichols).